We begin with the raw amino-acid sequence, 142 residues long: Galactose-6-phosphate isomerase subunit LacA 2 (142 aa).

The protein belongs to the LacAB/RpiB family. In terms of assembly, heteromultimeric protein consisting of LacA and LacB.

It catalyses the reaction aldehydo-D-galactose 6-phosphate = keto-D-tagatose 6-phosphate. Its pathway is carbohydrate metabolism; D-galactose 6-phosphate degradation; D-tagatose 6-phosphate from D-galactose 6-phosphate: step 1/1. This Streptococcus pyogenes serotype M1 protein is Galactose-6-phosphate isomerase subunit LacA 2.